A 100-amino-acid polypeptide reads, in one-letter code: Urease subunit gamma (100 aa).

The protein belongs to the urease gamma subunit family. Heterotrimer of UreA (gamma), UreB (beta) and UreC (alpha) subunits. Three heterotrimers associate to form the active enzyme.

It is found in the cytoplasm. The catalysed reaction is urea + 2 H2O + H(+) = hydrogencarbonate + 2 NH4(+). It participates in nitrogen metabolism; urea degradation; CO(2) and NH(3) from urea (urease route): step 1/1. The sequence is that of Urease subunit gamma from Bacillus sp. (strain TB-90).